The sequence spans 651 residues: Acetyl-coenzyme A synthetase (651 aa).

Residues 189–192 (RGGK), threonine 311, and asparagine 335 contribute to the CoA site. ATP is bound by residues 387-389 (GEP), 411-416 (DTWWQT), aspartate 500, and arginine 515. Residue serine 523 participates in CoA binding. Arginine 526 is a binding site for ATP. The Mg(2+) site is built by valine 537, histidine 539, and valine 542. Arginine 584 serves as a coordination point for CoA. An N6-acetyllysine modification is found at lysine 609.

Belongs to the ATP-dependent AMP-binding enzyme family. It depends on Mg(2+) as a cofactor. Post-translationally, acetylated. Deacetylation by the SIR2-homolog deacetylase activates the enzyme.

The catalysed reaction is acetate + ATP + CoA = acetyl-CoA + AMP + diphosphate. In terms of biological role, catalyzes the conversion of acetate into acetyl-CoA (AcCoA), an essential intermediate at the junction of anabolic and catabolic pathways. AcsA undergoes a two-step reaction. In the first half reaction, AcsA combines acetate with ATP to form acetyl-adenylate (AcAMP) intermediate. In the second half reaction, it can then transfer the acetyl group from AcAMP to the sulfhydryl group of CoA, forming the product AcCoA. This is Acetyl-coenzyme A synthetase from Agrobacterium fabrum (strain C58 / ATCC 33970) (Agrobacterium tumefaciens (strain C58)).